The chain runs to 202 residues: Nucleoside triphosphate pyrophosphatase (202 aa).

The active-site Proton acceptor is Asp79.

It belongs to the Maf family. A divalent metal cation is required as a cofactor.

Its subcellular location is the cytoplasm. The enzyme catalyses a ribonucleoside 5'-triphosphate + H2O = a ribonucleoside 5'-phosphate + diphosphate + H(+). The catalysed reaction is a 2'-deoxyribonucleoside 5'-triphosphate + H2O = a 2'-deoxyribonucleoside 5'-phosphate + diphosphate + H(+). Its function is as follows. Nucleoside triphosphate pyrophosphatase. May have a dual role in cell division arrest and in preventing the incorporation of modified nucleotides into cellular nucleic acids. This is Nucleoside triphosphate pyrophosphatase from Rhodopseudomonas palustris (strain HaA2).